Reading from the N-terminus, the 314-residue chain is Olfactory receptor 1468 (314 aa).

The Extracellular segment spans residues Met-1–His-25. N-linked (GlcNAc...) asparagine glycosylation is present at Asn-5. The chain crosses the membrane as a helical span at residues Val-26–Ile-49. At His-50–Thr-57 the chain is on the cytoplasmic side. Residues Pro-58 to Pro-79 traverse the membrane as a helical segment. Residues Lys-80–Gln-100 are Extracellular-facing. Cys-97 and Cys-189 are disulfide-bonded. Residues Leu-101–Tyr-120 form a helical membrane-spanning segment. Over Asp-121–Lys-139 the chain is Cytoplasmic. The helical transmembrane segment at Leu-140–Leu-158 threads the bilayer. Topologically, residues His-159–Glu-196 are extracellular. The helical transmembrane segment at Leu-197 to Ala-219 threads the bilayer. The Cytoplasmic portion of the chain corresponds to Arg-220–Lys-236. Residues Ile-237–Leu-260 form a helical membrane-spanning segment. At Cys-261–Thr-272 the chain is on the extracellular side. The helical transmembrane segment at Val-273–Leu-292 threads the bilayer. Residues Arg-293–Leu-314 are Cytoplasmic-facing.

It belongs to the G-protein coupled receptor 1 family. Olfactory epithelium.

The protein localises to the cell membrane. Its function is as follows. Odorant receptor. The polypeptide is Olfactory receptor 1468 (Olr1468) (Rattus norvegicus (Rat)).